The primary structure comprises 106 residues: Large ribosomal subunit protein bL21 (106 aa).

It belongs to the bacterial ribosomal protein bL21 family. Part of the 50S ribosomal subunit. Contacts protein L20.

Functionally, this protein binds to 23S rRNA in the presence of protein L20. The protein is Large ribosomal subunit protein bL21 of Chlamydia caviae (strain ATCC VR-813 / DSM 19441 / 03DC25 / GPIC) (Chlamydophila caviae).